The sequence spans 178 residues: ATP-dependent protease subunit HslV (178 aa).

Threonine 7 is a catalytic residue. Residues glycine 162, cysteine 165, and threonine 168 each contribute to the Na(+) site.

Belongs to the peptidase T1B family. HslV subfamily. As to quaternary structure, a double ring-shaped homohexamer of HslV is capped on each side by a ring-shaped HslU homohexamer. The assembly of the HslU/HslV complex is dependent on binding of ATP.

Its subcellular location is the cytoplasm. The catalysed reaction is ATP-dependent cleavage of peptide bonds with broad specificity.. With respect to regulation, allosterically activated by HslU binding. Its function is as follows. Protease subunit of a proteasome-like degradation complex believed to be a general protein degrading machinery. The protein is ATP-dependent protease subunit HslV of Burkholderia lata (strain ATCC 17760 / DSM 23089 / LMG 22485 / NCIMB 9086 / R18194 / 383).